The primary structure comprises 387 residues: Fetuin-B (387 aa).

A signal peptide spans Met1–Ala18. Cystatin fetuin-B-type domains lie at Ala25–Thr139 and Met150–Ser258. Asn37 is a glycosylation site (N-linked (GlcNAc...) asparagine). Cystine bridges form between Cys94–Cys105, Cys118–Cys138, Cys152–Cys155, Cys217–Cys225, and Cys238–Cys257. Asn137 carries N-linked (GlcNAc...) asparagine glycosylation. The tract at residues Ala264–Ser306 is disordered. N-linked (GlcNAc...) asparagine glycosylation is present at Asn271. Residues Ala272–Thr299 show a composition bias toward polar residues. Thr292 and Thr295 each carry an O-linked (GalNAc...) threonine glycan. The residue at position 320 (Ser320) is a Phosphoserine. Residues Lys366–Ser387 form a disordered region.

The protein belongs to the fetuin family. In terms of tissue distribution, liver and testis.

The protein resides in the secreted. Its function is as follows. Protease inhibitor required for egg fertilization. Required to prevent premature zona pellucida hardening before fertilization, probably by inhibiting the protease activity of ASTL, a protease that mediates the cleavage of ZP2 and triggers zona pellucida hardening. The polypeptide is Fetuin-B (FETUB) (Bos taurus (Bovine)).